A 55-amino-acid chain; its full sequence is Photosystem II reaction center protein K (55 aa).

Residues Met-1 to Ala-18 constitute a propeptide that is removed on maturation. Residues Ile-26 to Phe-46 form a helical membrane-spanning segment.

It belongs to the PsbK family. PSII is composed of 1 copy each of membrane proteins PsbA, PsbB, PsbC, PsbD, PsbE, PsbF, PsbH, PsbI, PsbJ, PsbK, PsbL, PsbM, PsbT, PsbX, PsbY, PsbZ, Psb30/Ycf12, at least 3 peripheral proteins of the oxygen-evolving complex and a large number of cofactors. It forms dimeric complexes.

Its subcellular location is the plastid. The protein resides in the chloroplast thylakoid membrane. In terms of biological role, one of the components of the core complex of photosystem II (PSII). PSII is a light-driven water:plastoquinone oxidoreductase that uses light energy to abstract electrons from H(2)O, generating O(2) and a proton gradient subsequently used for ATP formation. It consists of a core antenna complex that captures photons, and an electron transfer chain that converts photonic excitation into a charge separation. The chain is Photosystem II reaction center protein K from Marchantia polymorpha (Common liverwort).